The chain runs to 585 residues: Pyruvate kinase (585 aa).

Position 32 (Arg32) interacts with substrate. K(+) is bound by residues Asn34, Ser36, Asp66, and Thr67. Residue 34–37 (NFSH) coordinates ATP. Positions 73 and 156 each coordinate ATP. Glu221 contacts Mg(2+). Residues Gly244, Asp245, and Thr277 each contribute to the substrate site. Asp245 contributes to the Mg(2+) binding site.

Belongs to the pyruvate kinase family. The protein in the C-terminal section; belongs to the PEP-utilizing enzyme family. The cofactor is Mg(2+). It depends on K(+) as a cofactor.

The catalysed reaction is pyruvate + ATP = phosphoenolpyruvate + ADP + H(+). The protein operates within carbohydrate degradation; glycolysis; pyruvate from D-glyceraldehyde 3-phosphate: step 5/5. The protein is Pyruvate kinase (pyk) of Staphylococcus aureus (strain USA300).